A 117-amino-acid polypeptide reads, in one-letter code: Large ribosomal subunit protein uL18 (117 aa).

This sequence belongs to the universal ribosomal protein uL18 family. As to quaternary structure, part of the 50S ribosomal subunit; part of the 5S rRNA/L5/L18/L25 subcomplex. Contacts the 5S and 23S rRNAs.

In terms of biological role, this is one of the proteins that bind and probably mediate the attachment of the 5S RNA into the large ribosomal subunit, where it forms part of the central protuberance. This Sodalis glossinidius (strain morsitans) protein is Large ribosomal subunit protein uL18.